Here is a 540-residue protein sequence, read N- to C-terminus: Isocitrate lyase (540 aa).

Residue 103–105 (SGW) coordinates substrate. Aspartate 187 is a binding site for Mg(2+). Cysteine 225 serves as the catalytic Proton acceptor. Substrate is bound by residues 226-227 (GH), 385-389 (NNSPS), and threonine 458.

This sequence belongs to the isocitrate lyase/PEP mutase superfamily. Isocitrate lyase family. Homotetramer. It depends on Mg(2+) as a cofactor.

The catalysed reaction is D-threo-isocitrate = glyoxylate + succinate. The protein operates within carbohydrate metabolism; glyoxylate cycle; (S)-malate from isocitrate: step 1/2. It participates in one-carbon metabolism; formaldehyde assimilation via serine pathway. With respect to regulation, in the presence of magnesium, inhibited by oxalate, potassium cyanide, manganese, silver, cadmium and to a lesser extent by succinate, glycolate, iodoacetamide, DL-penicillamine, aluminum, sodium, potassium, lithium and strontium. Functionally, involved in the metabolic adaptation in response to environmental changes. Catalyzes the reversible formation of succinate and glyoxylate from isocitrate, a key step of the glyoxylate cycle, which operates as an anaplerotic route for replenishing the tricarboxylic acid cycle during growth on fatty acid substrates. May be involved in the assimilation of one-carbon compounds via the isocitrate lyase-positive serine pathway. This is Isocitrate lyase from Hyphomicrobium methylovorum.